A 396-amino-acid chain; its full sequence is Tryptophan synthase beta chain (396 aa).

Position 86 is an N6-(pyridoxal phosphate)lysine (lysine 86).

It belongs to the TrpB family. Tetramer of two alpha and two beta chains. It depends on pyridoxal 5'-phosphate as a cofactor.

The enzyme catalyses (1S,2R)-1-C-(indol-3-yl)glycerol 3-phosphate + L-serine = D-glyceraldehyde 3-phosphate + L-tryptophan + H2O. The protein operates within amino-acid biosynthesis; L-tryptophan biosynthesis; L-tryptophan from chorismate: step 5/5. The beta subunit is responsible for the synthesis of L-tryptophan from indole and L-serine. The polypeptide is Tryptophan synthase beta chain (Yersinia pseudotuberculosis serotype O:1b (strain IP 31758)).